The following is a 469-amino-acid chain: GTPase Der (469 aa).

2 consecutive EngA-type G domains span residues 30 to 193 and 203 to 376; these read PVLA…PEVA and RRVA…ASWD. GTP is bound by residues 36–43, 83–87, 145–148, 209–216, 256–260, and 321–324; these read GRPNVGKS, DTGGW, NKVD, GKPNVGKS, DTAGL, and NKWD. The KH-like domain occupies 377-459; that stretch reads TRIPTGPLNS…PIRINVRVRE (83 aa).

It belongs to the TRAFAC class TrmE-Era-EngA-EngB-Septin-like GTPase superfamily. EngA (Der) GTPase family. Associates with the 50S ribosomal subunit.

In terms of biological role, GTPase that plays an essential role in the late steps of ribosome biogenesis. In Mycobacterium ulcerans (strain Agy99), this protein is GTPase Der.